The following is a 261-amino-acid chain: Small ribosomal subunit protein mS23 (261 aa).

The segment at 233–261 is disordered; that stretch reads RASSPSASWTNETEEEQKPIDQDVEEIQL.

It belongs to the mitochondrion-specific ribosomal protein mS23 family. As to quaternary structure, component of the mitochondrial small ribosomal subunit.

The protein resides in the mitochondrion. This is Small ribosomal subunit protein mS23 (RSM25) from Kluyveromyces lactis (strain ATCC 8585 / CBS 2359 / DSM 70799 / NBRC 1267 / NRRL Y-1140 / WM37) (Yeast).